The chain runs to 358 residues: Fructose-bisphosphate aldolase (358 aa).

Serine 62 is a D-glyceraldehyde 3-phosphate binding site. The Proton donor role is filled by aspartate 109. The Zn(2+) site is built by histidine 110, aspartate 144, glutamate 174, and histidine 226. Position 227 (glycine 227) interacts with dihydroxyacetone phosphate. Histidine 264 is a Zn(2+) binding site. Dihydroxyacetone phosphate is bound by residues 265-267 (GGS) and 286-289 (NIDT).

The protein belongs to the class II fructose-bisphosphate aldolase family. Zn(2+) serves as cofactor.

The catalysed reaction is beta-D-fructose 1,6-bisphosphate = D-glyceraldehyde 3-phosphate + dihydroxyacetone phosphate. Its pathway is carbohydrate degradation; glycolysis; D-glyceraldehyde 3-phosphate and glycerone phosphate from D-glucose: step 4/4. Functionally, catalyzes the aldol condensation of dihydroxyacetone phosphate (DHAP or glycerone-phosphate) with glyceraldehyde 3-phosphate (G3P) to form fructose 1,6-bisphosphate (FBP) in gluconeogenesis and the reverse reaction in glycolysis. In Edwardsiella ictaluri (strain 93-146), this protein is Fructose-bisphosphate aldolase (fba).